A 285-amino-acid chain; its full sequence is Avenin-like b1 (285 aa).

An N-terminal signal peptide occupies residues 1–18; the sequence is MKVFILALLALTATTAIA.

This sequence belongs to the prolamin family. Contains disulfide bonds.

Functionally, seed storage protein. Might be integrated via inter-chain disulfide bonds within the glutenin polymer. The chain is Avenin-like b1 (AVNLB) from Triticum aestivum (Wheat).